Reading from the N-terminus, the 226-residue chain is ATP synthase F(0) complex subunit a (226 aa).

The next 6 helical transmembrane spans lie at 11–31, 68–88, 97–117, 138–158, 164–184, and 194–214; these read APTI…TLLI, WSLM…LGLL, QLSM…ITGL, IPML…ALAV, ITAG…LSTI, and VLLM…AYVF.

Belongs to the ATPase A chain family. As to quaternary structure, component of the ATP synthase complex composed at least of ATP5F1A/subunit alpha, ATP5F1B/subunit beta, ATP5MC1/subunit c (homooctomer), MT-ATP6/subunit a, MT-ATP8/subunit 8, ATP5ME/subunit e, ATP5MF/subunit f, ATP5MG/subunit g, ATP5MK/subunit k, ATP5MJ/subunit j, ATP5F1C/subunit gamma, ATP5F1D/subunit delta, ATP5F1E/subunit epsilon, ATP5PF/subunit F6, ATP5PB/subunit b, ATP5PD/subunit d, ATP5PO/subunit OSCP. ATP synthase complex consists of a soluble F(1) head domain (subunits alpha(3) and beta(3)) - the catalytic core - and a membrane F(0) domain - the membrane proton channel (subunits c, a, 8, e, f, g, k and j). These two domains are linked by a central stalk (subunits gamma, delta, and epsilon) rotating inside the F1 region and a stationary peripheral stalk (subunits F6, b, d, and OSCP). Interacts with DNAJC30; interaction is direct.

It is found in the mitochondrion inner membrane. The catalysed reaction is H(+)(in) = H(+)(out). Functionally, subunit a, of the mitochondrial membrane ATP synthase complex (F(1)F(0) ATP synthase or Complex V) that produces ATP from ADP in the presence of a proton gradient across the membrane which is generated by electron transport complexes of the respiratory chain. ATP synthase complex consist of a soluble F(1) head domain - the catalytic core - and a membrane F(1) domain - the membrane proton channel. These two domains are linked by a central stalk rotating inside the F(1) region and a stationary peripheral stalk. During catalysis, ATP synthesis in the catalytic domain of F(1) is coupled via a rotary mechanism of the central stalk subunits to proton translocation. With the subunit c (ATP5MC1), forms the proton-conducting channel in the F(0) domain, that contains two crucial half-channels (inlet and outlet) that facilitate proton movement from the mitochondrial intermembrane space (IMS) into the matrix. Protons are taken up via the inlet half-channel and released through the outlet half-channel, following a Grotthuss mechanism. The polypeptide is ATP synthase F(0) complex subunit a (Papio hamadryas (Hamadryas baboon)).